A 224-amino-acid chain; its full sequence is uncharacterized protein (224 aa).

It to M.tuberculosis Rv2558.

This is an uncharacterized protein from Mycobacterium tuberculosis (strain CDC 1551 / Oshkosh).